A 203-amino-acid polypeptide reads, in one-letter code: Glutathione S-transferase (203 aa).

The 78-residue stretch at 2 to 79 (PDYKVYYFNV…YLANQVGLAG (78 aa)) folds into the GST N-terminal domain. Glutathione is bound by residues Tyr8, Trp39, Lys43, 49–51 (GQM), and 63–64 (QS). The GST C-terminal domain maps to 81–203 (DDWENLMIDT…YIAKRPITEV (123 aa)).

The protein belongs to the GST superfamily. Sigma family. As to quaternary structure, homodimer.

The catalysed reaction is RX + glutathione = an S-substituted glutathione + a halide anion + H(+). In terms of biological role, conjugation of reduced glutathione to a wide number of exogenous and endogenous hydrophobic electrophiles. This Anopheles gambiae (African malaria mosquito) protein is Glutathione S-transferase (GstS1).